The chain runs to 487 residues: Beta-barrel assembly-enhancing protease (487 aa).

A signal peptide spans 1-27 (MFRQLKKNLVATLIAAMTIGQVAPAFA). Histidine 136 is a Zn(2+) binding site. Residue glutamate 137 is part of the active site. Residues histidine 140 and glutamate 201 each contribute to the Zn(2+) site. Residue aspartate 205 is the Proton donor of the active site. 4 TPR repeats span residues 309–342 (RAAQYGRALQAMEANKYDEARKTLQPLLAAEPGN), 344–376 (WYLDLATDIDLGQNKANEAINRLKNARDLRTNP), 377–409 (VLQLNLANAYLQGGQPQEAANILNRYTFNNKDD), and 427–460 (DQELAARAEGYALAGRLDQAISLLSSASSQVKLG).

Belongs to the peptidase M48 family. BepA subfamily. Zn(2+) is required as a cofactor.

It localises to the periplasm. Its function is as follows. Functions both as a chaperone and a metalloprotease. Maintains the integrity of the outer membrane by promoting either the assembly or the elimination of outer membrane proteins, depending on their folding state. The sequence is that of Beta-barrel assembly-enhancing protease from Escherichia coli O157:H7.